The following is a 485-amino-acid chain: Lysophospholipid acyltransferase 5 (485 aa).

A2 carries the N-acetylalanine modification. 7 consecutive transmembrane segments (helical) span residues 35 to 55 (ASEQ…FALF), 82 to 102 (YNFG…FLIL), 108 to 128 (TITA…AGYY), 139 to 158 (WTMP…MDYY), 176 to 196 (IWGV…GAFL), 232 to 252 (LALG…ITED), and 283 to 303 (VTCW…FNGL). Catalysis depends on residues N336 and H372. Transmembrane regions (helical) follow at residues 362 to 382 (GLSL…LVCF), 420 to 440 (LAQQ…FCLF), and 448 to 468 (VYKS…FILP). The Di-lysine motif signature appears at 482–485 (KKME).

This sequence belongs to the membrane-bound acyltransferase family.

It is found in the endoplasmic reticulum membrane. The catalysed reaction is a 1-acyl-sn-glycero-3-phosphocholine + an acyl-CoA = a 1,2-diacyl-sn-glycero-3-phosphocholine + CoA. The enzyme catalyses a 1-acyl-sn-glycero-3-phosphoethanolamine + an acyl-CoA = a 1,2-diacyl-sn-glycero-3-phosphoethanolamine + CoA. It carries out the reaction a 1-acyl-sn-glycero-3-phospho-L-serine + an acyl-CoA = a 1,2-diacyl-sn-glycero-3-phospho-L-serine + CoA. It catalyses the reaction (9Z,12Z)-octadecadienoyl-CoA + a 1-acyl-sn-glycero-3-phosphocholine = 1-acyl-2-(9Z,12Z)-octadecadienoyl-sn-glycero-3-phosphocholine + CoA. The catalysed reaction is (5Z,8Z,11Z,14Z)-eicosatetraenoyl-CoA + a 1-acyl-sn-glycero-3-phosphocholine = 1-acyl-2-(5Z,8Z,11Z,14Z-eicosatetraenoyl)-sn-glycero-3-phosphocholine + CoA. The enzyme catalyses dodecanoyl-CoA + 1-hexadecanoyl-sn-glycero-3-phosphocholine = 1-hexadecanoyl-2-dodecanoyl-sn-glycero-3-phosphocholine + CoA. It carries out the reaction octadecanoyl-CoA + 1-hexadecanoyl-sn-glycero-3-phosphocholine = 1-hexadecanoyl-2-octadecanoyl-sn-glycero-3-phosphocholine + CoA. It catalyses the reaction 1-dodecanoyl-sn-glycero-3-phosphocholine + hexadecanoyl-CoA = 1-dodecanoyl-2-hexadecanoyl-sn-glycero-3-phosphocholine + CoA. The catalysed reaction is 1-tetradecanoyl-sn-glycero-3-phosphocholine + hexadecanoyl-CoA = 1-tetradecanoyl-2-hexadecanoyl-sn-glycero-3-phosphocholine + CoA. The enzyme catalyses 1-hexadecanoyl-sn-glycero-3-phosphocholine + hexadecanoyl-CoA = 1,2-dihexadecanoyl-sn-glycero-3-phosphocholine + CoA. It carries out the reaction 1-octadecanoyl-sn-glycero-3-phosphocholine + hexadecanoyl-CoA = 1-octadecanoyl-2-hexadecanoyl-sn-glycero-3-phosphocholine + CoA. It catalyses the reaction 1-(9Z-octadecenoyl)-sn-glycero-3-phosphocholine + hexadecanoyl-CoA = 1-(9Z-octadecenoyl)-2-hexadecanoyl-sn-glycero-3-phosphocholine + CoA. The catalysed reaction is (9Z)-hexadecenoyl-CoA + 1-hexadecanoyl-sn-glycero-3-phosphocholine = 1-hexadecanoyl-2-(9Z-hexadecenoyl)-sn-glycero-3-phosphocholine + CoA. The enzyme catalyses 1-hexadecanoyl-sn-glycero-3-phosphocholine + (9Z)-octadecenoyl-CoA = 1-hexadecanoyl-2-(9Z-octadecenoyl)-sn-glycero-3-phosphocholine + CoA. It carries out the reaction (9Z,12Z)-octadecadienoyl-CoA + 1-hexadecanoyl-sn-glycero-3-phosphocholine = 1-hexadecanoyl-2-(9Z,12Z-octadecadienoyl)-sn-glycero-3-phosphocholine + CoA. It catalyses the reaction 1-dodecanoyl-sn-glycero-3-phosphocholine + (5Z,8Z,11Z,14Z)-eicosatetraenoyl-CoA = 1-dodecanoyl-2-(5Z,8Z,11Z,14Z)-eicosatetraenoyl-sn-glycero-3-phosphocholine + CoA. The catalysed reaction is (5Z,8Z,11Z,14Z)-eicosatetraenoyl-CoA + 1-hexadecanoyl-sn-glycero-3-phosphocholine = 1-hexadecanoyl-2-(5Z,8Z,11Z,14Z-eicosatetraenoyl)-sn-glycero-3-phosphocholine + CoA. The enzyme catalyses 1-octadecanoyl-sn-glycero-3-phosphocholine + (5Z,8Z,11Z,14Z)-eicosatetraenoyl-CoA = 1-octadecanoyl-2-(5Z,8Z,11Z,14Z-eicosatetraenoyl)-sn-glycero-3-phosphocholine + CoA. It carries out the reaction 1-eicosanoyl-sn-glycero-3-phosphocholine + (5Z,8Z,11Z,14Z)-eicosatetraenoyl-CoA = 1-eicosanoyl-2-(5Z,8Z,11Z,14Z)-eicosatetraenoyl-sn-glycero-3-phosphocholine + CoA. It catalyses the reaction 1-(9Z-octadecenoyl)-sn-glycero-3-phosphocholine + (9Z)-octadecenoyl-CoA = 1,2-di-(9Z-octadecenoyl)-sn-glycero-3-phosphocholine + CoA. The catalysed reaction is 1-(9Z-octadecenoyl)-sn-glycero-3-phosphocholine + (9Z,12Z)-octadecadienoyl-CoA = 1-(9Z)-octadecenoyl-2-(9Z,12Z)-octadecadienoyl-sn-glycero-3-phosphocholine + CoA. The enzyme catalyses 1-(9Z-octadecenoyl)-sn-glycero-3-phosphocholine + (5Z,8Z,11Z,14Z)-eicosatetraenoyl-CoA = 1-(9Z)-octadecenoyl-2-(5Z,8Z,11Z,14Z)-icosatetraenoyl-sn-glycero-3-phosphocholine + CoA. It carries out the reaction a 1-acyl-sn-glycero-3-phosphoethanolamine + (9Z,12Z)-octadecadienoyl-CoA = 1-acyl-2-(9Z,12Z)-octadecadienoyl-sn-glycero-3-phosphoethanolamine + CoA. It catalyses the reaction 1-(9Z-octadecenoyl)-sn-glycero-3-phosphoethanolamine + (9Z,12Z)-octadecadienoyl-CoA = 1-(9Z)-octadecenoyl-2-(9Z,12Z)-octadecadienoyl-sn-glycero-3-phosphoethanolamine + CoA. The catalysed reaction is 1-(10Z-heptadecenoyl)-sn-glycero-3-phosphoethanolamine + (9Z,12Z)-octadecadienoyl-CoA = 1-(10Z-heptadecenoyl)-2-(9Z,12Z-octadecadienoyl)-sn-glycero-3-phosphoethanolamine + CoA. The enzyme catalyses a 1-acyl-sn-glycero-3-phosphoethanolamine + (5Z,8Z,11Z,14Z)-eicosatetraenoyl-CoA = 1-acyl-2-(5Z,8Z,11Z,14Z)-eicosatetraenoyl-sn-glycero-3-phosphoethanolamine + CoA. It carries out the reaction 1-hexadecanoyl-sn-glycero-3-phosphoethanolamine + (5Z,8Z,11Z,14Z)-eicosatetraenoyl-CoA = 1-hexadecanoyl-2-(5Z,8Z,11Z,14Z-eicosatetraenoyl)-sn-glycero-3-phosphoethanolamine + CoA. It catalyses the reaction 1-(9Z-octadecenoyl)-sn-glycero-3-phosphoethanolamine + (5Z,8Z,11Z,14Z)-eicosatetraenoyl-CoA = 1-(9Z)-octadecenoyl-2-(5Z,8Z,11Z,14Z)-eicosatetraenoyl-sn-glycero-3-phosphoethanolamine + CoA. The catalysed reaction is 1-(10Z-heptadecenoyl)-sn-glycero-3-phosphoethanolamine + (5Z,8Z,11Z,14Z)-eicosatetraenoyl-CoA = 1-(10Z-heptadecenoyl)-2-(5Z,8Z,11Z,14Z-eicosatetraenoyl)-sn-glycero-3-phosphoethanolamine + CoA. The enzyme catalyses a 1-O-(1Z-alkenyl)-sn-glycero-3-phosphoethanolamine + (5Z,8Z,11Z,14Z)-eicosatetraenoyl-CoA = 1-O-(1Z)-alkenyl-2-(5Z,8Z,11Z,14Z)-eicosatetraenoyl-sn-glycero-3-phosphoethanolamine + CoA. It carries out the reaction a 1-acyl-sn-glycero-3-phospho-L-serine + (9Z,12Z)-octadecadienoyl-CoA = 1-acyl-2-(9Z,12Z-octadecadienoyl)-sn-glycero-3-phospho-L-serine + CoA. It catalyses the reaction a 1-acyl-sn-glycero-3-phospho-L-serine + (5Z,8Z,11Z,14Z)-eicosatetraenoyl-CoA = 1-acyl-2-(5Z,8Z,11Z,14Z-eicosatetraenoyl)-sn-glycero-3-phospho-L-serine + CoA. The catalysed reaction is 1-hexadecanoyl-sn-glycero-3-phospho-L-serine + (9Z)-octadecenoyl-CoA = 1-hexadecanoyl-2-(9Z-octadecenoyl)-sn-glycero-3-phospho-L-serine + CoA. The enzyme catalyses 1-(9Z-octadecenoyl)-sn-glycero-3-phospho-L-serine + (9Z)-octadecenoyl-CoA = 1,2-di-(9Z)-octadecenoyl-sn-glycero-3-phospho-L-serine + CoA. It carries out the reaction 1-hexadecanoyl-sn-glycero-3-phospho-L-serine + (9Z,12Z)-octadecadienoyl-CoA = 1-hexadecanoyl-2-(9Z,12Z-octadecadienoyl)-sn-glycero-3-phospho-L-serine + CoA. It catalyses the reaction 1-(9Z-octadecenoyl)-sn-glycero-3-phospho-L-serine + (9Z,12Z)-octadecadienoyl-CoA = 1-(9Z-octadecenoyl)-2-(9Z,12Z-octadienoyl)-sn-glycero-3-phospho-L-serine + CoA. The catalysed reaction is 1-hexadecanoyl-sn-glycero-3-phospho-L-serine + (5Z,8Z,11Z,14Z)-eicosatetraenoyl-CoA = 1-hexadecanoyl-2-(5Z,8Z,11Z,14Z-eicosatetraenoyl)-sn-glycero-3-phospho-L-serine + CoA. The enzyme catalyses 1-(9Z-octadecenoyl)-sn-glycero-3-phospho-L-serine + (5Z,8Z,11Z,14Z)-eicosatetraenoyl-CoA = 1-(9Z-octadecenoyl)-2-(5Z,8Z,11Z,14Z-eicosatetraenoyl)-sn-glycero-3-phospho-L-serine + CoA. It participates in lipid metabolism; phospholipid metabolism. In terms of biological role, lysophospholipid O-acyltransferase (LPLAT) that catalyzes the reacylation step of the phospholipid remodeling process also known as the Lands cycle. Catalyzes transfer of the fatty acyl chain from fatty acyl-CoA to 1-acyl lysophospholipid to form various classes of phospholipids. Converts 1-acyl lysophosphatidylcholine (LPC) into phosphatidylcholine (PC) (LPCAT activity), 1-acyl lysophosphatidylserine (LPS) into phosphatidylserine (PS) (LPSAT activity) and 1-acyl lysophosphatidylethanolamine (LPE) into phosphatidylethanolamine (PE) (LPEAT activity). Favors polyunsaturated fatty acyl-CoAs as acyl donors compared to saturated fatty acyl-CoAs. Has higher activity for LPC acyl acceptors compared to LPEs and LPSs. Can also transfer the fatty acyl chain from fatty acyl-CoA to 1-O-alkyl lysophospholipid or 1-O-alkenyl lysophospholipid with lower efficiency. Acts as a major LPC O-acyltransferase in liver and intestine. As a component of the liver X receptor/NR1H3 or NR1H2 signaling pathway, mainly catalyzes the incorporation of arachidonate into PCs of endoplasmic reticulum (ER) membranes, increasing membrane dynamics and enabling triacylglycerols transfer to nascent very low-density lipoprotein (VLDL) particles. Promotes processing of sterol regulatory protein SREBF1 in hepatocytes, likely by facilitating the translocation of SREBF1-SCAP complex from ER to the Golgi apparatus. Participates in mechanisms by which the liver X receptor/NR1H3 or NR1H2 signaling pathway counteracts lipid-induced ER stress response and inflammation. Down-regulates hepatic inflammation by limiting arachidonic acid availability for synthesis of inflammatory eicosanoids, such as prostaglandins. In enterocytes, acts as a component of a gut-brain feedback loop that coordinates dietary lipid absorption and food intake. Regulates the abundance of PCs containing linoleate and arachidonate in enterocyte membranes, enabling passive diffusion of fatty acids and cholesterol across the membrane for efficient chylomicron assembly. In the intestinal crypt, acts as a component of dietary-responsive phospholipid-cholesterol axis, regulating the biosynthesis of cholesterol and its mitogenic effects on intestinal stem cells. The sequence is that of Lysophospholipid acyltransferase 5 (LPCAT3) from Bos taurus (Bovine).